A 147-amino-acid chain; its full sequence is Hemoglobin subunit beta-1 (147 aa).

In terms of domain architecture, Globin spans Asn3–His147. Residues His64 and His93 each coordinate heme b.

Belongs to the globin family. As to quaternary structure, heterotetramer of two alpha chains and two beta chains. As to expression, red blood cells.

Its function is as follows. Involved in oxygen transport from the lung to the various peripheral tissues. The polypeptide is Hemoglobin subunit beta-1 (hbb1) (Xenopus tropicalis (Western clawed frog)).